A 329-amino-acid chain; its full sequence is UDP-glucose 4-epimerase (329 aa).

NAD(+) contacts are provided by residues 11 to 12 (YV), 31 to 36 (DNFSTG), 51 to 52 (DV), 71 to 75 (FAARS), threonine 115, tyrosine 139, lysine 143, and phenylalanine 167. Threonine 115 and tyrosine 139 together coordinate substrate. Residue tyrosine 139 is the Proton acceptor of the active site. Substrate is bound by residues asparagine 168, 185 to 186 (HL), 202 to 204 (FMF), arginine 217, and 277 to 280 (RAGD).

The protein belongs to the NAD(P)-dependent epimerase/dehydratase family. In terms of assembly, homodimer. Requires NAD(+) as cofactor.

It catalyses the reaction UDP-alpha-D-glucose = UDP-alpha-D-galactose. It participates in carbohydrate metabolism; galactose metabolism. Functionally, involved in the metabolism of galactose. Catalyzes the conversion of UDP-galactose (UDP-Gal) to UDP-glucose (UDP-Glc) through a mechanism involving the transient reduction of NAD. This is UDP-glucose 4-epimerase (galE) from Corynebacterium glutamicum (strain ATCC 13032 / DSM 20300 / JCM 1318 / BCRC 11384 / CCUG 27702 / LMG 3730 / NBRC 12168 / NCIMB 10025 / NRRL B-2784 / 534).